A 1841-amino-acid polypeptide reads, in one-letter code: Sucrase-isomaltase, intestinal (1841 aa).

Residues 1 to 12 (MAKKKFSALEIS) lie on the Cytoplasmic side of the membrane. Residue S7 is modified to Phosphoserine; by PKA. The chain crosses the membrane as a helical; Signal-anchor for type II membrane protein span at residues 13-32 (LIVLFIIVTAIAIALVTVLA). The Lumenal portion of the chain corresponds to 33 to 1841 (TKVPAVEEIK…LDEPIQITWS (1809 aa)). Residues 42-81 (KSPTPTSNSTPTSTPTSTSTPTSTSTPSPGKCPPEQGEPI) are disordered. A compositionally biased stretch (low complexity) spans 43–70 (SPTPTSNSTPTSTPTSTSTPTSTSTPSP). Residues 71 to 120 (GKCPPEQGEPINERINCIPEQHPTKAICEERGCCWRPWNNTVIPWCFFAD) form the P-type 1 domain. Intrachain disulfides connect C73–C104, C87–C103, and C98–C116. An N-linked (GlcNAc...) asparagine glycan is attached at N109. An isomaltase region spans residues 120–1013 (DNHGYNAESI…ELQLNPPNAR (894 aa)). D274 and D398 together coordinate substrate. 2 positions are modified to sulfotyrosine: Y401 and Y410. N-linked (GlcNAc...) asparagine glycosylation occurs at N464. Residue D514 is the Nucleophile; for isomaltase activity of the active site. R599 contributes to the substrate binding site. The active-site For isomaltase activity is D615. C646 and C657 form a disulfide bridge. H673 contacts substrate. Residues N758, N765, N867, and N910 are each glycosylated (N-linked (GlcNAc...) asparagine). A P-type 2 domain is found at 936 to 984 (RWCRTFSDNEKFTCYPDVGTATEGTCTQRGCLWQPVSGLSNVPPYYFPP). The tract at residues 1014-1841 (IKLPSNPIST…LDEPIQITWS (828 aa)) is sucrase. N-linked (GlcNAc...) asparagine glycosylation is found at N1240, N1308, N1345, N1359, and N1373. Residue Y1387 is modified to Sulfotyrosine. The active-site Nucleophile; for sucrase activity is D1399. The active-site For sucrase activity is E1402. N1485 carries an N-linked (GlcNAc...) asparagine glycan. The active-site Proton donor; for sucrase activity is D1512. N-linked (GlcNAc...) asparagine glycosylation is found at N1513, N1575, N1762, and N1829.

It belongs to the glycosyl hydrolase 31 family. The resulting sucrase and isomaltase subunits stay associated with one another in a complex by non-covalent linkages. The precursor is proteolytically cleaved when exposed to pancreatic proteases in the intestinal lumen. In terms of processing, sulfated.

It localises to the apical cell membrane. The catalysed reaction is Hydrolysis of sucrose and maltose by an alpha-D-glucosidase-type action.. The enzyme catalyses Hydrolysis of (1-&gt;6)-alpha-D-glucosidic linkages in some oligosaccharides produced from starch and glycogen by alpha-amylase, and in isomaltose.. Plays an important role in the final stage of carbohydrate digestion. Isomaltase activity is specific for both alpha-1,4- and alpha-1,6-oligosaccharides. This chain is Sucrase-isomaltase, intestinal (Si), found in Rattus norvegicus (Rat).